Reading from the N-terminus, the 217-residue chain is Ras-related protein RABA2c (217 aa).

GTP contacts are provided by residues 19–27 (GDSGVGKSN), 38–44 (CLESKST), 67–71 (DTAGQ), 125–128 (NKSD), and 155–157 (SAL). Residues 41 to 49 (SKSTIGVEF) carry the Effector region motif. A disordered region spans residues 195 to 217 (PGQGTTINVDDTSGGAKRACCSS). S-geranylgeranyl cysteine attachment occurs at residues Cys214 and Cys215.

This sequence belongs to the small GTPase superfamily. Rab family. In terms of tissue distribution, expressed in root tips.

The protein localises to the endosome membrane. Its subcellular location is the golgi apparatus. The protein resides in the trans-Golgi network membrane. Its function is as follows. Intracellular vesicle trafficking and protein transport. The chain is Ras-related protein RABA2c (RABA2C) from Arabidopsis thaliana (Mouse-ear cress).